The sequence spans 1191 residues: Zinc finger protein ush (1191 aa).

Disordered stretches follow at residues 1 to 153 (MLSS…PKYP) and 169 to 194 (PDAKELTLPDSRLLAPPPLVKPDTQA). The span at 19–28 (VDSRDSKDLS) shows a compositional bias: basic and acidic residues. The span at 61-73 (IDDDADEDAEFEE) shows a compositional bias: acidic residues. Serine 116 and serine 118 each carry phosphoserine. Residues 130 to 151 (ATPPSEPEASPCPSPSPCPTPK) show a composition bias toward pro residues. The segment at 202-235 (LLKPARFMCLPCGIAFSSPSTLEAHQAYYCSHRI) adopts a CCHC FOG-type 1 zinc-finger fold. 4 residues coordinate Zn(2+): cysteine 210, cysteine 213, histidine 226, and cysteine 231. A disordered region spans residues 239 to 274 (DEAGSDKSGAGGSGATAGDAAGLTGGSTEPPAKMAR). Positions 254-266 (TAGDAAGLTGGST) are enriched in low complexity. Residues 279–301 (YGCTQCSYSADKKVSLNRHMRMH) form a C2H2-type 1 zinc finger. Residues 304–338 (SPAAPTLAGLPSLLQNGIAPPGVTPNPMEDSSSQQ) are disordered. The CCHC FOG-type 2 zinc-finger motif lies at 335–368 (SSQQTDRYCSHCDIRFNNIKTYRAHKQHYCSSRR). The Zn(2+) site is built by cysteine 343, cysteine 346, histidine 359, and cysteine 364. Disordered stretches follow at residues 361 to 413 (QHYC…ARNK), 504 to 540 (EPERPSAPSSAAEATEAKSSPPEPKRKEAGLTRESAP), and 601 to 635 (APSLPSSPSMSPSPKRRAISPRSSGAGSASSMSPP). Over residues 383–394 (AGSGPGSAGGSI) the composition is skewed to gly residues. 3 stretches are compositionally biased toward low complexity: residues 509–523 (SAPSSAAEATEAKSS), 602–613 (PSLPSSPSMSPS), and 620–635 (SPRSSGAGSASSMSPP). 2 consecutive CCHC FOG-type zinc fingers follow at residues 720–753 (YVKKGVSKCMECNIVFCKYENYLAHKQHYCSARS) and 791–824 (PVAYQQLICAACGIKYTSLDNLRAHQNYYCPKGG). Residues cysteine 728, cysteine 731, histidine 744, cysteine 749, cysteine 799, cysteine 802, histidine 815, and cysteine 820 each contribute to the Zn(2+) site. 3 consecutive C2H2-type zinc fingers follow at residues 882–907 (NKCPVCGVVSPTAALAKKHMEMHGTV), 910–932 (YRCSICQYKGNTLRGMRTHIRTH), and 983–1006 (FNCDYCNYVSTYKGNVLRHMKLMH). A disordered region spans residues 1011–1073 (INSPSISPDT…HENNNSPIAT (63 aa)). Residues serine 1013, serine 1015, and serine 1017 each carry the phosphoserine modification. Polar residues predominate over residues 1025 to 1040 (VTSNPTTNQHSNSDVS). Residues 1113–1146 (AAEVMKKYCSTCDISFNYVKTYLAHKQFYCKNKP) form a CCHC FOG-type 5 zinc finger. Zn(2+) contacts are provided by cysteine 1121, cysteine 1124, histidine 1137, and cysteine 1142. Serine 1156 carries the phosphoserine modification.

The protein belongs to the FOG (Friend of GATA) family. As to quaternary structure, interacts with pnr, although weak this interaction is essential. Interacts with the isoform SrpNC of srp. Interacts with CtBP corepressor. First expressed in stage 5 at high levels in the primordium of the amnioserosa. Also expressed in germ band extending embryos in cells of the developing anterior and posterior midgut and in hemocyte precursors present in the cephalic mesoderm. In embryonic stage 8, it is expressed in blood cell precursors. By stage 10, it is expressed in hemocyte precursors that have spread throughout the lateral and ventral head mesoderm. By stage 11, it is expressed in the dorsal ectoderm and in precursor cells of the hemocytes and fat body. As embryogenesis proceeds, it is also expressed in stage 13 plasmatocytes migrating throughout the head mesoderm and down the ventral midline. By late embryogenesis, expression strongly decreases but remains in the dorsal ectoderm during dorsal closure, in cells within, or associated with, the central nervous system, and in plasmatocytes circulating throughout the embryonic hemolymph. During larval development, it is expressed in primary and secondary lobes of lymph glands. Expressed in the dorsal part of the thoracic imaginal disk.

It localises to the nucleus. Its function is as follows. Transcription regulator that modulates expression mediated by transcription factors of the GATA family such as pnr and srp. Represses transcription of proneural achaete-scute complex (AS-C), which is usually activated by pnr. Involved in cardiogenesis, blood, and eye development. During hematopoiesis, it is required to restrict the number of crystal cells, probably via its interaction with the isoform SrpNC of srp. Negatively regulates expression of sr. Probably acts by interacting with the GATA-type zinc finger of proteins such as pnr and srp, possibly antagonizing the interaction between the GATA-type zinc finger and some cofactor. This Drosophila melanogaster (Fruit fly) protein is Zinc finger protein ush (ush).